Reading from the N-terminus, the 414-residue chain is UDP-N-acetylmuramoylalanine--D-glutamate ligase (414 aa).

104–110 (GSNGKST) contributes to the ATP binding site.

Belongs to the MurCDEF family.

It localises to the cytoplasm. The catalysed reaction is UDP-N-acetyl-alpha-D-muramoyl-L-alanine + D-glutamate + ATP = UDP-N-acetyl-alpha-D-muramoyl-L-alanyl-D-glutamate + ADP + phosphate + H(+). It participates in cell wall biogenesis; peptidoglycan biosynthesis. Functionally, cell wall formation. Catalyzes the addition of glutamate to the nucleotide precursor UDP-N-acetylmuramoyl-L-alanine (UMA). In Francisella philomiragia subsp. philomiragia (strain ATCC 25017 / CCUG 19701 / FSC 153 / O#319-036), this protein is UDP-N-acetylmuramoylalanine--D-glutamate ligase.